The chain runs to 103 residues: Toluene-4-monooxygenase system, effector component (103 aa).

This sequence belongs to the TmoD/XamoD family. The alkene monooxygenase multicomponent enzyme system is composed of an electron transfer component and a monooxygenase component interacting with the effector protein TmoD. The electron transfer component is composed of a ferredoxin reductase (TmoF) and a ferredoxin (TmoC), and the monooxygenase component is formed by a heterohexamer (dimer of heterotrimers) of two alpha subunits (TmoA), two beta subunits (TmoE) and two gamma subunits (TmoB).

The protein operates within xenobiotic degradation; toluene degradation. In terms of biological role, effector component of the toluene-4-monooxygenase multicomponent enzyme system which catalyzes the O2- and NADH-dependent hydroxylation of toluene to form p-cresol. Required for optimal efficiency and specificity of the holoenzyme. This chain is Toluene-4-monooxygenase system, effector component, found in Ectopseudomonas mendocina (Pseudomonas mendocina).